The sequence spans 459 residues: uncharacterized protein (459 aa).

12 helical membrane passes run 25 to 45, 52 to 72, 95 to 115, 123 to 143, 167 to 187, 192 to 212, 249 to 269, 279 to 299, 310 to 330, 332 to 352, 389 to 409, and 420 to 440; these read SYGF…IYLL, AGIP…FAAI, PYLL…FLSP, LIYA…VNIP, IGSL…LVKF, VGYP…FYIC, VLMT…LVYF, LMAY…VFLP, TAMI…MLPS, VYVF…PNGI, SLSG…PNAV, and ALLL…IGFL.

The protein belongs to the sodium:galactoside symporter (TC 2.A.2) family.

It is found in the cell membrane. This is an uncharacterized protein from Bacillus subtilis (strain 168).